Consider the following 129-residue polypeptide: Small ribosomal subunit protein uS11 (129 aa).

Belongs to the universal ribosomal protein uS11 family. As to quaternary structure, part of the 30S ribosomal subunit. Interacts with proteins S7 and S18. Binds to IF-3.

Located on the platform of the 30S subunit, it bridges several disparate RNA helices of the 16S rRNA. Forms part of the Shine-Dalgarno cleft in the 70S ribosome. The polypeptide is Small ribosomal subunit protein uS11 (Nitrosomonas eutropha (strain DSM 101675 / C91 / Nm57)).